Here is a 128-residue protein sequence, read N- to C-terminus: Tachykinin-4 (128 aa).

The N-terminal stretch at 1 to 16 (MLPLLALLLLIGPSVC) is a signal peptide. Positions 17 to 54 (TTAGDREELAFGAEAESWVTVNLKGIPVPSIELKLQEL) are excised as a propeptide. The residue at position 66 (methionine 66) is a Methionine amide. A propeptide spanning residues 69 to 128 (RVGGYQLGRIVQDLLGTRGLSIEGTCRQAASQQRARPGAVTRESLQSREEDEAPLTTSNV) is cleaved from the precursor. A disordered region spans residues 96-128 (QAASQQRARPGAVTRESLQSREEDEAPLTTSNV).

Belongs to the tachykinin family. As to expression, expressed in hematopoietic cells with highest levels in pre- and pro-B cells but not in later developmental stages. Also detected in uterus, skeletal muscle, brain, spleen, stomach, skin and lactating mammary gland and in cells of myeloid lineage including dendritic and microglial cells and macrophages. In uterus, highest expression is observed in non-pregnant diestrus mice and in day 5 pregnant mice. Compared with mice in diestrus, decreases 2.6-fold in uteri from non-pregnant mice in estrus and 10.2-fold in day 17 pregnant mice. Detected at sites of chronic inflammation such as granulomas.

Its subcellular location is the secreted. Its function is as follows. Tachykinins are active peptides which excite neurons, evoke behavioral responses, are potent vasodilators and secretagogues, and contract (directly or indirectly) many smooth muscles. Hemokinin induces plasma extravasation, mast cell degranulation, muscle contraction, salivary secretion and scratching behavior. Increases sperm motility. Induces potent analgesic effects and may play a role in pain modulation. Promotes survival of bone marrow B lineage cells and of cultured LPS-stimulated pre-B cells and may act as an autocrine factor required for B-cell survival and proliferation. Lowers systemic arterial pressure following intravenous injection. Induces interferon-gamma production and may play a role in the inflammatory response. Shows potent affinity and specificity for the NK-1 receptor. The sequence is that of Tachykinin-4 from Mus musculus (Mouse).